A 152-amino-acid chain; its full sequence is Spermine/spermidine N(1)-acetyltransferase (152 aa).

The N-acetyltransferase domain maps to isoleucine 3–leucine 152. Acetyl-CoA is bound by residues phenylalanine 82–isoleucine 84, glutamine 89–lysine 95, and asparagine 122–arginine 131. Tyrosine 129 serves as the catalytic Proton donor.

This sequence belongs to the acetyltransferase family.

The enzyme catalyses an alkane-alpha,omega-diamine + acetyl-CoA = an N-acetylalkane-alpha,omega-diamine + CoA + H(+). It catalyses the reaction spermine + acetyl-CoA = N(1)-acetylspermine + CoA + H(+). The catalysed reaction is spermidine + acetyl-CoA = N(1)-acetylspermidine + CoA + H(+). It functions in the pathway amine and polyamine degradation; spermine degradation. Its pathway is amine and polyamine degradation; spermidine degradation. Its activity is regulated as follows. Putrescine and N(8)-acetylspermidine are competitive inhibitors of spermidine acetylation. Acetylates both spermidine and spermine at primary propyl amine moieties, with spermine being the preferred substrate. The chain is Spermine/spermidine N(1)-acetyltransferase (bltD) from Bacillus subtilis (strain 168).